Reading from the N-terminus, the 1121-residue chain is uncharacterized protein (1121 aa).

The segment at 179-198 is disordered; the sequence is GPGECQSVHNQSSGSGSNSY. Residues Asn188, Asn325, Asn351, Asn449, Asn561, and Asn615 are each glycosylated (N-linked (GlcNAc...) asparagine; by host). Disordered stretches follow at residues 649–684 and 701–734; these read KRIHSQNENPEDGQVREGGCSDVRNEPPRKSARIHN and STRQDASGGSSSGTKNEYYDDESELTGLSDTDSD. A compositionally biased stretch (polar residues) spans 701-715; the sequence is STRQDASGGSSSGTK. N-linked (GlcNAc...) asparagine; by host glycosylation is found at Asn838, Asn911, Asn914, and Asn980.

Belongs to the herpesviridae US22 family.

This is an uncharacterized protein from Homo sapiens (Human).